We begin with the raw amino-acid sequence, 260 residues long: Putative serine protease 45 (260 aa).

A Peptidase S1 domain is found at 1–234; it reads MTRHWPWEVS…YTKWIKKQMS (234 aa). A disulfide bond links Cys-19 and Cys-35. Catalysis depends on His-34, which acts as the Charge relay system. Residue Asn-55 is glycosylated (N-linked (GlcNAc...) asparagine). Residue Asp-82 is the Charge relay system of the active site. 3 disulfides stabilise this stretch: Cys-116–Cys-192, Cys-151–Cys-173, and Cys-182–Cys-210. Ser-186 functions as the Charge relay system in the catalytic mechanism.

It belongs to the peptidase S1 family.

This Homo sapiens (Human) protein is Putative serine protease 45.